We begin with the raw amino-acid sequence, 164 residues long: MTRLPKLAVFDLDYTLWPFWVDTHVDPPFHKSSDGTVRDRRGQNIQLYPEVPEVLGRLQSLGVPVAAASRTSEIQGANQLLELFDLGKYFIQREIYPGSKVTHFERLHHKTGVPFSQMVFFDDENRNIIDVGRLGVTCIHIRDGMSLQTLTQGLETFAKAQAGL.

Asp-11 acts as the Nucleophile in catalysis. Residue Asp-11 coordinates Mg(2+). Leu-12 and Asp-13 together coordinate phosphate. Residue Asp-13 coordinates Mg(2+). Asp-13 acts as the Proton donor in catalysis. Trp-20 lines the substrate pocket. The phosphate site is built by Ser-69, Arg-70, and Lys-100. Arg-70 provides a ligand contact to substrate. Asp-123 is a binding site for Mg(2+).

Belongs to the HAD-like hydrolase superfamily. Mg(2+) is required as a cofactor.

The catalysed reaction is O-phospho-L-tyrosyl-[protein] + H2O = L-tyrosyl-[protein] + phosphate. Inhibited by vanadate and zinc, and slightly by calcium. Magnesium-dependent phosphatase which may act as a tyrosine phosphatase. In Mus musculus (Mouse), this protein is Magnesium-dependent phosphatase 1 (Mdp1).